The following is a 283-amino-acid chain: ATP phosphoribosyltransferase (283 aa).

This sequence belongs to the ATP phosphoribosyltransferase family. Long subfamily. Mg(2+) is required as a cofactor.

The protein resides in the cytoplasm. It catalyses the reaction 1-(5-phospho-beta-D-ribosyl)-ATP + diphosphate = 5-phospho-alpha-D-ribose 1-diphosphate + ATP. The protein operates within amino-acid biosynthesis; L-histidine biosynthesis; L-histidine from 5-phospho-alpha-D-ribose 1-diphosphate: step 1/9. Its activity is regulated as follows. Feedback inhibited by histidine. Functionally, catalyzes the condensation of ATP and 5-phosphoribose 1-diphosphate to form N'-(5'-phosphoribosyl)-ATP (PR-ATP). Has a crucial role in the pathway because the rate of histidine biosynthesis seems to be controlled primarily by regulation of HisG enzymatic activity. In Bifidobacterium longum (strain NCC 2705), this protein is ATP phosphoribosyltransferase.